The sequence spans 71 residues: Small ribosomal subunit protein bS21 (71 aa).

This sequence belongs to the bacterial ribosomal protein bS21 family.

The polypeptide is Small ribosomal subunit protein bS21 (Vesicomyosocius okutanii subsp. Calyptogena okutanii (strain HA)).